The primary structure comprises 554 residues: MTPLIFVTGGVVSSLGKGIAAASLASILEARGLKVTMVKLDPYINVDPGTMSPFQHGEVYVTDDGAETDLDLGHYERFVRTRLSRNNSVTTGRIYQNVICKERRGDYLGATVQVIPHITDEIRRCIDEATASFDVALVEIGGTVGDIESLPFLEAIRQVRIERGAERTMFMHLTLVPYIAAAGELKTKPTQHSVKELRSIGIQPDVLLCRSEQVIPDSERRKIALFTNVSERAVIGCPDIDVLYGMPLELRRQGLDEIVIDQFKLSGTASLADLSEWEDVVDAIKHPLDEVTIAVVGKYVDYQDAYKSVGEALKHGGLRQRTKVNLKWVEAQDLEGSDMGALKDIDGILVPGGFGDRGFEGKVLASRYAREQRVPYFGICYGMQAAVVDYARHVAGLEGANSTENDRQSPHPVIALITEWRTTTGEVERRDEKSDLGGTMRLGLQEQRLKAGTLVRELYGRDVVGERHRHRYEFNNRYRTQLEDAGLVIAAKSMDDTLVEMIELPREMHPWFLACQAHPEFLSTPRDGHPLFIGFVKAARARKAGGKLLREVCV.

An amidoligase domain region spans residues 1-265 (MTPLIFVTGG…DEIVIDQFKL (265 aa)). Serine 13 contacts CTP. Serine 13 lines the UTP pocket. ATP-binding positions include 14–19 (SLGKGI) and aspartate 71. Residues aspartate 71 and glutamate 139 each coordinate Mg(2+). CTP is bound by residues 146–148 (DIE), 186–191 (KTKPTQ), and lysine 222. Residues 186–191 (KTKPTQ) and lysine 222 each bind UTP. Residues 292-545 (TIAVVGKYVD…VKAARARKAG (254 aa)) enclose the Glutamine amidotransferase type-1 domain. Glycine 353 contacts L-glutamine. Cysteine 380 acts as the Nucleophile; for glutamine hydrolysis in catalysis. L-glutamine is bound by residues 381–384 (YGMQ), glutamate 404, and arginine 471. Active-site residues include histidine 518 and glutamate 520.

This sequence belongs to the CTP synthase family. As to quaternary structure, homotetramer.

The enzyme catalyses UTP + L-glutamine + ATP + H2O = CTP + L-glutamate + ADP + phosphate + 2 H(+). It carries out the reaction L-glutamine + H2O = L-glutamate + NH4(+). The catalysed reaction is UTP + NH4(+) + ATP = CTP + ADP + phosphate + 2 H(+). Its pathway is pyrimidine metabolism; CTP biosynthesis via de novo pathway; CTP from UDP: step 2/2. Allosterically activated by GTP, when glutamine is the substrate; GTP has no effect on the reaction when ammonia is the substrate. The allosteric effector GTP functions by stabilizing the protein conformation that binds the tetrahedral intermediate(s) formed during glutamine hydrolysis. Inhibited by the product CTP, via allosteric rather than competitive inhibition. In terms of biological role, catalyzes the ATP-dependent amination of UTP to CTP with either L-glutamine or ammonia as the source of nitrogen. Regulates intracellular CTP levels through interactions with the four ribonucleotide triphosphates. The protein is CTP synthase of Xylella fastidiosa (strain 9a5c).